We begin with the raw amino-acid sequence, 145 residues long: 3-dehydroquinate dehydratase (145 aa).

Residue tyrosine 24 is the Proton acceptor of the active site. Residues asparagine 75, histidine 81, and aspartate 88 each coordinate substrate. The active-site Proton donor is the histidine 102. Residues 103-104 and arginine 113 each bind substrate; that span reads LS.

It belongs to the type-II 3-dehydroquinase family. As to quaternary structure, homododecamer.

The enzyme catalyses 3-dehydroquinate = 3-dehydroshikimate + H2O. It functions in the pathway metabolic intermediate biosynthesis; chorismate biosynthesis; chorismate from D-erythrose 4-phosphate and phosphoenolpyruvate: step 3/7. Catalyzes a trans-dehydration via an enolate intermediate. The polypeptide is 3-dehydroquinate dehydratase (Chelativorans sp. (strain BNC1)).